We begin with the raw amino-acid sequence, 210 residues long: Imidazoleglycerol-phosphate dehydratase (210 aa).

This sequence belongs to the imidazoleglycerol-phosphate dehydratase family.

It localises to the cytoplasm. The catalysed reaction is D-erythro-1-(imidazol-4-yl)glycerol 3-phosphate = 3-(imidazol-4-yl)-2-oxopropyl phosphate + H2O. The protein operates within amino-acid biosynthesis; L-histidine biosynthesis; L-histidine from 5-phospho-alpha-D-ribose 1-diphosphate: step 6/9. This chain is Imidazoleglycerol-phosphate dehydratase, found in Mycobacterium marinum (strain ATCC BAA-535 / M).